We begin with the raw amino-acid sequence, 102 residues long: Small ribosomal subunit protein uS10 (102 aa).

This sequence belongs to the universal ribosomal protein uS10 family. In terms of assembly, part of the 30S ribosomal subunit.

Involved in the binding of tRNA to the ribosomes. This is Small ribosomal subunit protein uS10 from Finegoldia magna (strain ATCC 29328 / DSM 20472 / WAL 2508) (Peptostreptococcus magnus).